The primary structure comprises 417 residues: CinA-like protein (417 aa).

It belongs to the CinA family.

This Microcystis aeruginosa (strain NIES-843 / IAM M-2473) protein is CinA-like protein.